The chain runs to 249 residues: Leucyl/phenylalanyl-tRNA--protein transferase (249 aa).

Positions 1 to 21 (MSRTLPHLLSSDPASPFPPAE) are disordered.

The protein belongs to the L/F-transferase family.

Its subcellular location is the cytoplasm. The catalysed reaction is N-terminal L-lysyl-[protein] + L-leucyl-tRNA(Leu) = N-terminal L-leucyl-L-lysyl-[protein] + tRNA(Leu) + H(+). It catalyses the reaction N-terminal L-arginyl-[protein] + L-leucyl-tRNA(Leu) = N-terminal L-leucyl-L-arginyl-[protein] + tRNA(Leu) + H(+). The enzyme catalyses L-phenylalanyl-tRNA(Phe) + an N-terminal L-alpha-aminoacyl-[protein] = an N-terminal L-phenylalanyl-L-alpha-aminoacyl-[protein] + tRNA(Phe). Functionally, functions in the N-end rule pathway of protein degradation where it conjugates Leu, Phe and, less efficiently, Met from aminoacyl-tRNAs to the N-termini of proteins containing an N-terminal arginine or lysine. The polypeptide is Leucyl/phenylalanyl-tRNA--protein transferase (Xanthomonas campestris pv. campestris (strain 8004)).